Here is a 351-residue protein sequence, read N- to C-terminus: Protein RecA (351 aa).

67–74 (GPESSGKT) is an ATP binding site.

Belongs to the RecA family.

The protein resides in the cytoplasm. Functionally, can catalyze the hydrolysis of ATP in the presence of single-stranded DNA, the ATP-dependent uptake of single-stranded DNA by duplex DNA, and the ATP-dependent hybridization of homologous single-stranded DNAs. It interacts with LexA causing its activation and leading to its autocatalytic cleavage. The polypeptide is Protein RecA (Arthrobacter sp. (strain FB24)).